A 758-amino-acid chain; its full sequence is General transcription and DNA repair factor IIH helicase subunit XPD (758 aa).

The Helicase ATP-binding domain occupies 7–285 (DVTVYFPYDN…TDAGRLRAEY (279 aa)). ATP is bound at residue 42 to 49 (MPTGTGKT). [4Fe-4S] cluster contacts are provided by Cys-116, Cys-134, Cys-155, and Cys-190. The DEAH box signature appears at 234-238 (DEAHN).

The protein belongs to the helicase family. RAD3/XPD subfamily. As to quaternary structure, component of the 7-subunit TFIIH core complex composed of XPB, XPD, TFB1/GTF2H1, GTF2H2/P44, TFB4/GTF2H3, TFB2/GTF2H4 and TFB5/GTF2H5, which is active in NER. The core complex associates with the 3-subunit CDK-activating kinase (CAK) module composed of CYCH1/cyclin H1, CDKD and MAT1/At4g30820 to form the 10-subunit holoenzyme (holo-TFIIH) active in transcription. Interacts with GTF2H2/p44. [4Fe-4S] cluster is required as a cofactor. In terms of tissue distribution, expressed at low levels in all tissues.

Its subcellular location is the nucleus. The catalysed reaction is Couples ATP hydrolysis with the unwinding of duplex DNA at the replication fork by translocating in the 5'-3' direction. This creates two antiparallel DNA single strands (ssDNA). The leading ssDNA polymer is the template for DNA polymerase III holoenzyme which synthesizes a continuous strand.. It catalyses the reaction ATP + H2O = ADP + phosphate + H(+). Its function is as follows. ATP-dependent 5'-3' DNA helicase, component of the general transcription and DNA repair factor IIH (TFIIH) core complex, which is involved in general and transcription-coupled nucleotide excision repair (NER) of damaged DNA and, when complexed to CDK-activating kinase (CAK), involved in transcription by RNA polymerase II. In NER, TFIIH acts by opening DNA around the lesion to allow the excision of the damaged oligonucleotide and its replacement by a new DNA fragment. The ATP-dependent helicase activity of XPD is required for DNA opening. In transcription, TFIIH has an essential role in transcription initiation. When the pre-initiation complex (PIC) has been established, TFIIH is required for promoter opening and promoter escape. Phosphorylation of the C-terminal tail (CTD) of the largest subunit of RNA polymerase II by the kinase module CAK controls the initiation of transcription. XPD acts by forming a bridge between CAK and the core-TFIIH complex. Essential during plant growth. May negatively regulate a common response program mediated by UV damage and heat stress, that leads to tissue death and reduced chloroplast function. In Arabidopsis thaliana (Mouse-ear cress), this protein is General transcription and DNA repair factor IIH helicase subunit XPD.